The primary structure comprises 122 residues: S-adenosylmethionine decarboxylase proenzyme (122 aa).

Serine 69 acts as the Schiff-base intermediate with substrate; via pyruvic acid in catalysis. Serine 69 carries the pyruvic acid (Ser); by autocatalysis modification. Residue histidine 74 is the Proton acceptor; for processing activity of the active site. Cysteine 89 acts as the Proton donor; for catalytic activity in catalysis.

The protein belongs to the prokaryotic AdoMetDC family. Type 1 subfamily. In terms of assembly, heterotetramer of two alpha and two beta chains arranged as a dimer of alpha/beta heterodimers. It depends on pyruvate as a cofactor. Post-translationally, is synthesized initially as an inactive proenzyme. Formation of the active enzyme involves a self-maturation process in which the active site pyruvoyl group is generated from an internal serine residue via an autocatalytic post-translational modification. Two non-identical subunits are generated from the proenzyme in this reaction, and the pyruvate is formed at the N-terminus of the alpha chain, which is derived from the carboxyl end of the proenzyme. The post-translation cleavage follows an unusual pathway, termed non-hydrolytic serinolysis, in which the side chain hydroxyl group of the serine supplies its oxygen atom to form the C-terminus of the beta chain, while the remainder of the serine residue undergoes an oxidative deamination to produce ammonia and the pyruvoyl group blocking the N-terminus of the alpha chain.

The catalysed reaction is S-adenosyl-L-methionine + H(+) = S-adenosyl 3-(methylsulfanyl)propylamine + CO2. The protein operates within amine and polyamine biosynthesis; S-adenosylmethioninamine biosynthesis; S-adenosylmethioninamine from S-adenosyl-L-methionine: step 1/1. Functionally, catalyzes the decarboxylation of S-adenosylmethionine to S-adenosylmethioninamine (dcAdoMet), the propylamine donor required for the synthesis of the polyamines spermine and spermidine from the diamine putrescine. The polypeptide is S-adenosylmethionine decarboxylase proenzyme (Sulfurisphaera tokodaii (strain DSM 16993 / JCM 10545 / NBRC 100140 / 7) (Sulfolobus tokodaii)).